The primary structure comprises 349 residues: Ribosomal RNA small subunit methyltransferase C (349 aa).

It belongs to the methyltransferase superfamily. RsmC family. Monomer.

The protein resides in the cytoplasm. The catalysed reaction is guanosine(1207) in 16S rRNA + S-adenosyl-L-methionine = N(2)-methylguanosine(1207) in 16S rRNA + S-adenosyl-L-homocysteine + H(+). Functionally, specifically methylates the guanine in position 1207 of 16S rRNA in the 30S particle. This chain is Ribosomal RNA small subunit methyltransferase C, found in Psychromonas ingrahamii (strain DSM 17664 / CCUG 51855 / 37).